A 158-amino-acid chain; its full sequence is MTRAYLGLGSNIGDKAAMLAGAVEHLAATPGIRVVARSADYRTPPWGDTDQDWFLNAAVAIDTELTPHGLLEVCLSIEAALGRVRERRWGPRVIDIDVLAYEGAQVSDERLVLPHRFVRERAFVLVPLAEIAPDLVIGGETVREALAKLDPSGIERVE.

Belongs to the HPPK family.

The catalysed reaction is 6-hydroxymethyl-7,8-dihydropterin + ATP = (7,8-dihydropterin-6-yl)methyl diphosphate + AMP + H(+). It functions in the pathway cofactor biosynthesis; tetrahydrofolate biosynthesis; 2-amino-4-hydroxy-6-hydroxymethyl-7,8-dihydropteridine diphosphate from 7,8-dihydroneopterin triphosphate: step 4/4. Catalyzes the transfer of pyrophosphate from adenosine triphosphate (ATP) to 6-hydroxymethyl-7,8-dihydropterin, an enzymatic step in folate biosynthesis pathway. The chain is 2-amino-4-hydroxy-6-hydroxymethyldihydropteridine pyrophosphokinase (folK) from Methylorubrum extorquens (strain ATCC 14718 / DSM 1338 / JCM 2805 / NCIMB 9133 / AM1) (Methylobacterium extorquens).